The sequence spans 237 residues: Phosphoribosylaminoimidazole-succinocarboxamide synthase (237 aa).

The protein belongs to the SAICAR synthetase family.

The enzyme catalyses 5-amino-1-(5-phospho-D-ribosyl)imidazole-4-carboxylate + L-aspartate + ATP = (2S)-2-[5-amino-1-(5-phospho-beta-D-ribosyl)imidazole-4-carboxamido]succinate + ADP + phosphate + 2 H(+). Its pathway is purine metabolism; IMP biosynthesis via de novo pathway; 5-amino-1-(5-phospho-D-ribosyl)imidazole-4-carboxamide from 5-amino-1-(5-phospho-D-ribosyl)imidazole-4-carboxylate: step 1/2. This Sodalis glossinidius (strain morsitans) protein is Phosphoribosylaminoimidazole-succinocarboxamide synthase.